The primary structure comprises 47 residues: MATKSVNKPDEPVFYPVFTVRWLAVHTLAIPTVFFLGAIAAMQFIQR.

A helical membrane pass occupies residues 22–38; that stretch reads WLAVHTLAIPTVFFLGA. Residue H26 coordinates heme.

The protein belongs to the PsbE/PsbF family. As to quaternary structure, heterodimer of an alpha subunit and a beta subunit. PSII is composed of 1 copy each of membrane proteins PsbA, PsbB, PsbC, PsbD, PsbE, PsbF, PsbH, PsbI, PsbJ, PsbK, PsbL, PsbM, PsbT, PsbX, PsbY, PsbZ, Psb30/Ycf12, peripheral proteins PsbO, CyanoQ (PsbQ), PsbU, PsbV and a large number of cofactors. It forms dimeric complexes. Requires heme b as cofactor.

It localises to the cellular thylakoid membrane. This b-type cytochrome is tightly associated with the reaction center of photosystem II (PSII). PSII is a light-driven water:plastoquinone oxidoreductase that uses light energy to abstract electrons from H(2)O, generating O(2) and a proton gradient subsequently used for ATP formation. It consists of a core antenna complex that captures photons, and an electron transfer chain that converts photonic excitation into a charge separation. In Synechococcus sp. (strain JA-3-3Ab) (Cyanobacteria bacterium Yellowstone A-Prime), this protein is Cytochrome b559 subunit beta.